The sequence spans 259 residues: Small ribosomal subunit protein uS7m (259 aa).

A mitochondrion-targeting transit peptide spans 1-39; sequence MLRLIKQPLFRCASSGHLMKESLVFIHQTRTFQVGKFTS. Phosphothreonine is present on threonine 157.

Belongs to the universal ribosomal protein uS7 family. Component of the mitochondrial small ribosomal subunit (mt-SSU). Mature yeast 74S mitochondrial ribosomes consist of a small (37S) and a large (54S) subunit. The 37S small subunit contains a 15S ribosomal RNA (15S mt-rRNA) and at least 32 different proteins. The 54S large subunit contains a 21S rRNA (21S mt-rRNA) and at least 45 different proteins.

The protein localises to the mitochondrion. Its function is as follows. Component of the mitochondrial ribosome (mitoribosome), a dedicated translation machinery responsible for the synthesis of mitochondrial genome-encoded proteins, including at least some of the essential transmembrane subunits of the mitochondrial respiratory chain. The mitoribosomes are attached to the mitochondrial inner membrane and translation products are cotranslationally integrated into the membrane. The sequence is that of Small ribosomal subunit protein uS7m (rsm7) from Schizosaccharomyces pombe (strain 972 / ATCC 24843) (Fission yeast).